Reading from the N-terminus, the 92-residue chain is Small ribosomal subunit protein bS20 (92 aa).

The protein belongs to the bacterial ribosomal protein bS20 family.

Binds directly to 16S ribosomal RNA. This chain is Small ribosomal subunit protein bS20, found in Methylacidiphilum infernorum (isolate V4) (Methylokorus infernorum (strain V4)).